The chain runs to 126 residues: UPF0738 protein BH2850 (126 aa).

Belongs to the UPF0738 family.

This Halalkalibacterium halodurans (strain ATCC BAA-125 / DSM 18197 / FERM 7344 / JCM 9153 / C-125) (Bacillus halodurans) protein is UPF0738 protein BH2850.